We begin with the raw amino-acid sequence, 56 residues long: Photosystem II reaction center X protein (56 aa).

A helical transmembrane segment spans residues 27–47; the sequence is IGSFLAAGALIVAPAAAALIW.

Belongs to the PsbX family. Type 2 subfamily. In terms of assembly, PSII consists of a core antenna complex that captures photons, and an electron transfer chain that converts photonic excitation into a charge separation. PSII forms dimeric complexes.

The protein localises to the cellular thylakoid membrane. Its function is as follows. Involved in the binding and/or turnover of quinones at the Q(B) site of Photosystem II. The polypeptide is Photosystem II reaction center X protein (Prochlorococcus marinus (strain NATL2A)).